We begin with the raw amino-acid sequence, 47 residues long: Large ribosomal subunit protein eL40 (47 aa).

It belongs to the eukaryotic ribosomal protein eL40 family.

The chain is Large ribosomal subunit protein eL40 from Methanococcus maripaludis (strain C5 / ATCC BAA-1333).